Reading from the N-terminus, the 190-residue chain is dITP/XTP pyrophosphatase (190 aa).

Substrate is bound at residue 7 to 12 (SNNKNK). The active-site Proton acceptor is the Asp68. Mg(2+) is bound at residue Asp68. Substrate contacts are provided by residues Thr69, 148–151 (FGYD), Lys171, and 176–177 (HR).

Belongs to the HAM1 NTPase family. Homodimer. Mg(2+) serves as cofactor.

The enzyme catalyses XTP + H2O = XMP + diphosphate + H(+). It carries out the reaction dITP + H2O = dIMP + diphosphate + H(+). It catalyses the reaction ITP + H2O = IMP + diphosphate + H(+). Its function is as follows. Pyrophosphatase that catalyzes the hydrolysis of nucleoside triphosphates to their monophosphate derivatives, with a high preference for the non-canonical purine nucleotides XTP (xanthosine triphosphate), dITP (deoxyinosine triphosphate) and ITP. Seems to function as a house-cleaning enzyme that removes non-canonical purine nucleotides from the nucleotide pool, thus preventing their incorporation into DNA/RNA and avoiding chromosomal lesions. This chain is dITP/XTP pyrophosphatase, found in Flavobacterium psychrophilum (strain ATCC 49511 / DSM 21280 / CIP 103535 / JIP02/86).